A 324-amino-acid chain; its full sequence is Olfactory receptor 51D1 (324 aa).

At 1–38 (MQKPQLLVPIIATSNGNLVHAAYFLLVGIPGLGPTIHF) the chain is on the extracellular side. Residues 39–59 (WLAFPLCFMYALATLGNLTIV) traverse the membrane as a helical segment. The Cytoplasmic portion of the chain corresponds to 60-67 (LIIRVERR). Residues 68–88 (LHEPMYLFLAMLSTIDLVLSS) form a helical membrane-spanning segment. Residues 89–112 (ITMPKMASLFLMGIQEIEFNICLA) are Extracellular-facing. Cysteine 110 and cysteine 202 are disulfide-bonded. The chain crosses the membrane as a helical span at residues 113-133 (QMFLIHALSAVESAVLLAMAF). Residues 134–152 (DRFVAICHPLRHASVLTGC) lie on the Cytoplasmic side of the membrane. The chain crosses the membrane as a helical span at residues 153 to 173 (TVAKIGLSALTRGFVFFFPLP). At 174-209 (FILKWLSYCQTHTVTHSFCLHQDIMKLSCTDTRVNV) the chain is on the extracellular side. The helical transmembrane segment at 210–230 (VYGLFIILSVMGVDSLFIGFS) threads the bilayer. Residues 231 to 250 (YILILWAVLELSSRRAALKA) are Cytoplasmic-facing. A helical membrane pass occupies residues 251–271 (FNTCISHLCAVLVFYVPLIGL). Residues 272–285 (SVVHRLGGPTSLLH) lie on the Extracellular side of the membrane. A helical membrane pass occupies residues 286–306 (VVMANTYLLLPPVVNPLVYGA). At 307–324 (KTKEICSRVLCMFSQGGK) the chain is on the cytoplasmic side.

The protein belongs to the G-protein coupled receptor 1 family.

It localises to the cell membrane. Functionally, odorant receptor. This is Olfactory receptor 51D1 (OR51D1) from Homo sapiens (Human).